A 130-amino-acid polypeptide reads, in one-letter code: Large ribosomal subunit protein bL17 (130 aa).

Belongs to the bacterial ribosomal protein bL17 family. Part of the 50S ribosomal subunit. Contacts protein L32.

This chain is Large ribosomal subunit protein bL17, found in Shewanella pealeana (strain ATCC 700345 / ANG-SQ1).